Reading from the N-terminus, the 127-residue chain is UPF0102 protein Geob_1494 (127 aa).

It belongs to the UPF0102 family.

The polypeptide is UPF0102 protein Geob_1494 (Geotalea daltonii (strain DSM 22248 / JCM 15807 / FRC-32) (Geobacter daltonii)).